Here is a 308-residue protein sequence, read N- to C-terminus: Olfactory receptor 13H1 (308 aa).

Residues 1–25 (MAMDNVTAVFQFLLIGISNYPQWRD) lie on the Extracellular side of the membrane. Asparagine 5 carries N-linked (GlcNAc...) asparagine glycosylation. A helical membrane pass occupies residues 26–46 (TFFTLVLIIYLSTLLGNGFMI). Residues 47 to 54 (FLIHFDPN) are Cytoplasmic-facing. The helical transmembrane segment at 55–75 (LHTPIYFFLSNLSFLDLCYGT) threads the bilayer. The Extracellular portion of the chain corresponds to 76–99 (ASMPQALVHCFSTHPYLSYPRCLA). Cysteine 97 and cysteine 188 are joined by a disulfide. A helical membrane pass occupies residues 100–120 (QTSVSLALATAECLLLAAMAY). Over 121–139 (DRVVAISNPLRYSVVMNGP) the chain is Cytoplasmic. Residues 140-159 (VCVCLVATSWGTSLVLTAML) traverse the membrane as a helical segment. The Extracellular segment spans residues 160–196 (ILSLRLHFCGANVINHFACEILSLIKLTCSDTSLNEF). A helical membrane pass occupies residues 197–216 (MILITSIFTLLLPFGFVLLS). Residues 217 to 236 (YIRIAMAIIRIRSLQGRLKA) lie on the Cytoplasmic side of the membrane. Residues 237 to 257 (FTTCGSHLTVVTIFYGSAISM) form a helical membrane-spanning segment. The Extracellular segment spans residues 258–270 (YMKTQSKSYPDQD). Residues 271-291 (KFISVFYGALTPMLNPLIYSL) traverse the membrane as a helical segment. Residues 292–308 (RKKDVKRAIRKVMLKRT) are Cytoplasmic-facing.

This sequence belongs to the G-protein coupled receptor 1 family.

The protein resides in the cell membrane. In terms of biological role, odorant receptor. This is Olfactory receptor 13H1 (OR13H1) from Homo sapiens (Human).